Consider the following 572-residue polypeptide: Proline--tRNA ligase (572 aa).

The protein belongs to the class-II aminoacyl-tRNA synthetase family. ProS type 1 subfamily. As to quaternary structure, homodimer.

It is found in the cytoplasm. The enzyme catalyses tRNA(Pro) + L-proline + ATP = L-prolyl-tRNA(Pro) + AMP + diphosphate. Functionally, catalyzes the attachment of proline to tRNA(Pro) in a two-step reaction: proline is first activated by ATP to form Pro-AMP and then transferred to the acceptor end of tRNA(Pro). As ProRS can inadvertently accommodate and process non-cognate amino acids such as alanine and cysteine, to avoid such errors it has two additional distinct editing activities against alanine. One activity is designated as 'pretransfer' editing and involves the tRNA(Pro)-independent hydrolysis of activated Ala-AMP. The other activity is designated 'posttransfer' editing and involves deacylation of mischarged Ala-tRNA(Pro). The misacylated Cys-tRNA(Pro) is not edited by ProRS. This chain is Proline--tRNA ligase, found in Escherichia coli O7:K1 (strain IAI39 / ExPEC).